A 226-amino-acid polypeptide reads, in one-letter code: Probable GPI-anchored adhesin-like protein PGA28 (226 aa).

A signal peptide spans 1–26 (MKFFAYFAVIALSSASLINLFKRATA). The tract at residues 119-209 (DTEATTGSDT…SQQTSSHAGG (91 aa)) is disordered. The span at 131–148 (KAATGATTSAGTGVTKTS) shows a compositional bias: low complexity. Residues 149-160 (ETGGVSSTANSE) are compositionally biased toward polar residues. Positions 161-208 (AKSGSVTTSKSGSTSISESKTTSGSSSSGKSSSSTSSASSQQTSSHAG) are enriched in low complexity. A lipid anchor (GPI-anchor amidated serine) is attached at S197. The propeptide at 198 to 226 (ASSQQTSSHAGGASGAFVSLLGLFAALLI) is removed in mature form.

Post-translationally, predicted to be a cleavage substrate for KEX2.

It is found in the cell membrane. In terms of biological role, putative adhesin which is involved in cell adhesion and virulence. Plays a role in Candida-bacterial interactions and subsequent regulation of filamentation. The protein is Probable GPI-anchored adhesin-like protein PGA28 (PGA28) of Candida albicans (strain SC5314 / ATCC MYA-2876) (Yeast).